The chain runs to 26 residues: Conotoxin reg6(gamma) (26 aa).

The span at 1-12 shows a compositional bias: acidic residues; it reads RVLEPGXEDPDV. The disordered stretch occupies residues 1–26; that stretch reads RVLEPGXEDPDVGEPAGEYEHHLLEX. Glu-4 is modified (4-carboxyglutamate). Pro-5 is modified (4-hydroxyproline). Glu-8 is modified (4-carboxyglutamate). A 4-hydroxyproline modification is found at Pro-10. Glu-14 bears the 4-carboxyglutamate mark. A 4-hydroxyproline modification is found at Pro-15. Residues Glu-18, Glu-20, and Glu-25 each carry the 4-carboxyglutamate modification.

In terms of tissue distribution, expressed by the venom duct.

The protein localises to the secreted. The polypeptide is Conotoxin reg6(gamma) (Conus regius (Crown cone)).